Consider the following 217-residue polypeptide: Probable transaldolase (217 aa).

Catalysis depends on Lys83, which acts as the Schiff-base intermediate with substrate.

Belongs to the transaldolase family. Type 3B subfamily.

It localises to the cytoplasm. The enzyme catalyses D-sedoheptulose 7-phosphate + D-glyceraldehyde 3-phosphate = D-erythrose 4-phosphate + beta-D-fructose 6-phosphate. Its pathway is carbohydrate degradation; pentose phosphate pathway; D-glyceraldehyde 3-phosphate and beta-D-fructose 6-phosphate from D-ribose 5-phosphate and D-xylulose 5-phosphate (non-oxidative stage): step 2/3. Its function is as follows. Transaldolase is important for the balance of metabolites in the pentose-phosphate pathway. The chain is Probable transaldolase (tal) from Aquifex aeolicus (strain VF5).